We begin with the raw amino-acid sequence, 320 residues long: Short-chain dehydrogenase/reductase ATR7 (320 aa).

Positions 32, 34, 55, 70, 93, 134, 167, 171, and 202 each coordinate NADP(+). Tyr167 functions as the Proton acceptor in the catalytic mechanism. The Lowers pKa of active site Tyr role is filled by Lys171.

Belongs to the short-chain dehydrogenases/reductases (SDR) family.

The protein operates within mycotoxin biosynthesis. Functionally, short-chain dehydrogenase/reductase; part of the core atranone cluster (CAC) which products are predicted to catalyze most or all steps of mycotoxin atranone synthesis, starting from geranylgeranyl pyrophosphate (GGPP). The initial cyclization of GGPP to dolabellane is probably performed by the terpene cyclase ATR13. The Baeyer-Villiger oxidation near the end of the atranone synthesis, which converts atranones D and E to atranones F and G is predicted to be catalyzed by the monooxygenase ATR8. Of the CAC's other predicted gene products, the reducing PKS ATR6 might synthesize a polyketide chain. This polyketide is probably transferred onto the atranone backbone by the polyketide transferase ATR5. Other predicted CAC products include 4 oxygenases (ATR2, ATR3, ATR4, and ATR14), 3 short-chain reductases (ATR7, ATR9, and ATR10), and a methyltransferase (ATR12). These may all be involved in the various steps of atranone biosynthesis, although their specific roles must await experimental determination. In Stachybotrys chlorohalonatus (strain IBT 40285), this protein is Short-chain dehydrogenase/reductase ATR7.